We begin with the raw amino-acid sequence, 221 residues long: ATP phosphoribosyltransferase (221 aa).

The protein belongs to the ATP phosphoribosyltransferase family. Short subfamily. In terms of assembly, heteromultimer composed of HisG and HisZ subunits.

It localises to the cytoplasm. It catalyses the reaction 1-(5-phospho-beta-D-ribosyl)-ATP + diphosphate = 5-phospho-alpha-D-ribose 1-diphosphate + ATP. It functions in the pathway amino-acid biosynthesis; L-histidine biosynthesis; L-histidine from 5-phospho-alpha-D-ribose 1-diphosphate: step 1/9. Its function is as follows. Catalyzes the condensation of ATP and 5-phosphoribose 1-diphosphate to form N'-(5'-phosphoribosyl)-ATP (PR-ATP). Has a crucial role in the pathway because the rate of histidine biosynthesis seems to be controlled primarily by regulation of HisG enzymatic activity. This chain is ATP phosphoribosyltransferase, found in Carboxydothermus hydrogenoformans (strain ATCC BAA-161 / DSM 6008 / Z-2901).